The primary structure comprises 166 residues: uncharacterized protein (166 aa).

The HTH asnC-type domain maps to 3 to 65 (LTEKETEILE…IDWRKVDGHE (63 aa)). Positions 22–41 (LETIAKMAGIPVNEVKTIID) form a DNA-binding region, H-T-H motif.

This is an uncharacterized protein from Bacillus subtilis (strain 168).